Here is a 390-residue protein sequence, read N- to C-terminus: 5-hydroxytryptamine receptor 1B (390 aa).

Residues 1 to 46 (MEEPGAQCAPPLAAGSQIAVPQANLSAAHSHNCSAEGYIYQDSIAL) are Extracellular-facing. N-linked (GlcNAc...) asparagine glycosylation is found at Asn24 and Asn32. A helical membrane pass occupies residues 47 to 72 (PWKVLLVLLLALFTLATTLSNAFVVA). Residues 73 to 86 (TVYRTRKLHTPANY) are Cytoplasmic-facing. A helical membrane pass occupies residues 87–111 (LIASLAVTDLLVSILVMPISTMYTV). Residues 112-119 (TGRWTLGQ) lie on the Extracellular side of the membrane. A helical transmembrane segment spans residues 120–145 (VVCDLWLSSDITCCTASIMHLCVIAL). A disulfide bridge links Cys122 with Cys199. Ergotamine is bound by residues Asp129 and Thr134. A DRY motif; important for ligand-induced conformation changes and signaling motif is present at residues 146–148 (DRY). At 146-165 (DRYWAITDAVEYSAKRTPKR) the chain is on the cytoplasmic side. The chain crosses the membrane as a helical span at residues 166–184 (AAIMIRLVWVFSICISLPP). Topologically, residues 185–205 (FFWRQAKAEEEVSECLVNTDH) are extracellular. Ergotamine is bound at residue Val201. Residues 206-229 (VLYTVYSTVGAFYLPTLLLIALYG) form a helical membrane-spanning segment. Residues 230-315 (RIYVEARSRI…AARERKATKT (86 aa)) are Cytoplasmic-facing. A compositionally biased stretch (polar residues) spans 260–272 (SPGSTTSVTSINS). Positions 260 to 282 (SPGSTTSVTSINSRAPDVPSESG) are disordered. A helical transmembrane segment spans residues 316–337 (LGIILGVFIVCWLPFFIISLVM). The Extracellular portion of the chain corresponds to 338–347 (PICKDACWFH). A helical transmembrane segment spans residues 348-370 (QAIFDFFTWLGYVNSLINPIIYT). The short motif at 365-369 (NPIIY) is the NPxxY motif; important for ligand-induced conformation changes and signaling element. Residues 371-390 (MSNEDFKQAFHKLIRFKCTS) lie on the Cytoplasmic side of the membrane. Cys388 is lipidated: S-palmitoyl cysteine.

Belongs to the G-protein coupled receptor 1 family. In terms of assembly, homodimer. Heterodimer with HTR1D. In terms of processing, phosphorylated. Desensitization of the receptor may be mediated by its phosphorylation. Palmitoylated.

It is found in the cell membrane. G-protein coupled receptor for 5-hydroxytryptamine (serotonin). Also functions as a receptor for ergot alkaloid derivatives, various anxiolytic and antidepressant drugs and other psychoactive substances, such as lysergic acid diethylamide (LSD). Ligand binding causes a conformation change that triggers signaling via guanine nucleotide-binding proteins (G proteins) and modulates the activity of downstream effectors, such as adenylate cyclase. HTR1B is coupled to G(i)/G(o) G alpha proteins and mediates inhibitory neurotransmission by inhibiting adenylate cyclase activity. Arrestin family members inhibit signaling via G proteins and mediate activation of alternative signaling pathways. Regulates the release of 5-hydroxytryptamine, dopamine and acetylcholine in the brain, and thereby affects neural activity, nociceptive processing, pain perception, mood and behavior. Besides, plays a role in vasoconstriction of cerebral arteries. The polypeptide is 5-hydroxytryptamine receptor 1B (HTR1B) (Oryctolagus cuniculus (Rabbit)).